The chain runs to 487 residues: 3-octaprenyl-4-hydroxybenzoate carboxy-lyase (487 aa).

Position 172 (asparagine 172) interacts with Mn(2+). Residues isoleucine 175 to arginine 177, arginine 189 to leucine 191, and arginine 194 to glycine 195 contribute to the prenylated FMN site. Mn(2+) is bound at residue glutamate 238. Residue aspartate 287 is the Proton donor of the active site.

It belongs to the UbiD family. Homohexamer. Requires prenylated FMN as cofactor. Mn(2+) is required as a cofactor.

Its subcellular location is the cell membrane. It catalyses the reaction a 4-hydroxy-3-(all-trans-polyprenyl)benzoate + H(+) = a 2-(all-trans-polyprenyl)phenol + CO2. It functions in the pathway cofactor biosynthesis; ubiquinone biosynthesis. Catalyzes the decarboxylation of 3-octaprenyl-4-hydroxy benzoate to 2-octaprenylphenol, an intermediate step in ubiquinone biosynthesis. In Nitrosomonas europaea (strain ATCC 19718 / CIP 103999 / KCTC 2705 / NBRC 14298), this protein is 3-octaprenyl-4-hydroxybenzoate carboxy-lyase.